Consider the following 2349-residue polypeptide: Reducing polyketide synthase hmp8 (2349 aa).

Positions 9 to 435 (HVPVAIIGLA…GTNGHVVLEA (427 aa)) constitute a Ketosynthase family 3 (KS3) domain. Residues Cys-182, His-317, and His-357 each act as for beta-ketoacyl synthase activity in the active site. Positions 551-856 (FVFTGQGAQW…SHNGIKNVAY (306 aa)) are malonyl-CoA:ACP transacylase (MAT) domain. The interval 930–1066 (RSLIGAPVPM…GLVAIDYEES (137 aa)) is N-terminal hotdog fold. One can recognise a PKS/mFAS DH domain in the interval 930-1250 (RSLIGAPVPM…TSELDMDSGK (321 aa)). Residues 932-1244 (LIGAPVPMMA…SVKDFRTSEL (313 aa)) form a dehydratase (DH) domain region. His-962 acts as the Proton acceptor; for dehydratase activity in catalysis. Residues 1094-1250 (PEHYAHDKFY…TSELDMDSGK (157 aa)) form a C-terminal hotdog fold region. Asp-1160 acts as the Proton donor; for dehydratase activity in catalysis. The tract at residues 1641–1953 (GLLDTLKFVP…QGKHRGKMVL (313 aa)) is enoyl reductase (ER) domain. Residues 1977–2157 (ATYLFVGGLG…ISVNLGIMRD (181 aa)) are ketoreductase (KR) domain. A Carrier domain is found at 2267-2344 (EAAEIITDAL…SFAVKIAEKS (78 aa)). Residue Ser-2304 is modified to O-(pantetheine 4'-phosphoryl)serine.

The protein operates within secondary metabolite biosynthesis. Reducing polyketide synthase; part of the gene cluster that mediates the biosynthesis of hypothemycin, a resorcylic acid lactone (RAL) that irreversibly inhibits a subset of protein kinases with a conserved cysteine in the ATP binding site such as human ERK2. The first step is performed by both PKSs hmp3 and hmp8 and leads to the production of 7',8'-dehydrozearalenol (DHZ). The highly reducing PKS hpm8 synthesizes the reduced hexaketide (7S,11S,2E,8E)-7,11-dihydroxy-dodeca-2,8-dienoate, which is transferred downstream to the non-reducing PKS hpm3. Hpm3 then extends the reduced hexaketide to a nonaketide, after which regioselective cyclization and macrolactonization affords DHZ. The next step is the conversion of DHZ into aigialomycin C and is performed by the O-methyltransferase hmp5, the FAD-binding monooxygenase hmp7, and the cytochrome P450 monooxygenase hmp1. The wide substrate tolerance of the hmp5 and hmp7 implies that the reactions from DHZ to aigialomycin C can occur in any order. The steps from aigialomycin C to hypothemycin are less well established. The FAD-linked oxidoreductase hmp9 presumably catalyzes oxidation of the C-6' hydroxyl to a ketone. The timing of this oxidation is important, since the resulting enone functional group is a Michael acceptor that can react spontaneously with glutathione, an abundant metabolite in fungal cells. The glutathione S-transferase hmp2 catalyzes cis-trans isomerization of the 7',8' double bond with equilibrium favoring the trans isomer. The hpm6-encoded transporter might preferentially pump hypothemycin out of the cell relative to the trans isomer aigialomycin A. The cis-to-trans isomerization may be coupled with C-4' hydroxylation, since all known hypothemycin analogs containing the enone functional group also have hydroxyl groups at both C-4' and C-5'. In Hypomyces subiculosus (Nectria subiculosa), this protein is Reducing polyketide synthase hmp8.